Here is a 419-residue protein sequence, read N- to C-terminus: CCA-adding enzyme (419 aa).

ATP contacts are provided by S54 and R57. CTP is bound by residues S54 and R57. Mg(2+)-binding residues include D66, D68, and D118. The ATP site is built by H141, K161, and Y170. H141, K161, and Y170 together coordinate CTP.

It belongs to the tRNA nucleotidyltransferase/poly(A) polymerase family. Archaeal CCA-adding enzyme subfamily. In terms of assembly, homodimer. It depends on Mg(2+) as a cofactor.

It carries out the reaction a tRNA precursor + 2 CTP + ATP = a tRNA with a 3' CCA end + 3 diphosphate. The catalysed reaction is a tRNA with a 3' CCA end + 2 CTP + ATP = a tRNA with a 3' CCACCA end + 3 diphosphate. Catalyzes the addition and repair of the essential 3'-terminal CCA sequence in tRNAs without using a nucleic acid template. Adds these three nucleotides in the order of C, C, and A to the tRNA nucleotide-73, using CTP and ATP as substrates and producing inorganic pyrophosphate. tRNA 3'-terminal CCA addition is required both for tRNA processing and repair. Also involved in tRNA surveillance by mediating tandem CCA addition to generate a CCACCA at the 3' terminus of unstable tRNAs. While stable tRNAs receive only 3'-terminal CCA, unstable tRNAs are marked with CCACCA and rapidly degraded. The sequence is that of CCA-adding enzyme from Pyrobaculum aerophilum (strain ATCC 51768 / DSM 7523 / JCM 9630 / CIP 104966 / NBRC 100827 / IM2).